A 280-amino-acid chain; its full sequence is Polyamine aminopropyltransferase (280 aa).

Residues 2–235 form the PABS domain; sequence GGWIDEEHRG…GWWSWTFAAV (234 aa). Q29 provides a ligand contact to S-methyl-5'-thioadenosine. Residues H60 and D84 each contribute to the spermidine site. Residues E104 and 136 to 137 each bind S-methyl-5'-thioadenosine; that span reads DG. Residue D155 is the Proton acceptor of the active site. P162 contributes to the S-methyl-5'-thioadenosine binding site.

It belongs to the spermidine/spermine synthase family. Homodimer or homotetramer.

The protein localises to the cytoplasm. It carries out the reaction S-adenosyl 3-(methylsulfanyl)propylamine + putrescine = S-methyl-5'-thioadenosine + spermidine + H(+). The protein operates within amine and polyamine biosynthesis; spermidine biosynthesis; spermidine from putrescine: step 1/1. Its function is as follows. Catalyzes the irreversible transfer of a propylamine group from the amino donor S-adenosylmethioninamine (decarboxy-AdoMet) to putrescine (1,4-diaminobutane) to yield spermidine. The chain is Polyamine aminopropyltransferase from Parasynechococcus marenigrum (strain WH8102).